The following is a 314-amino-acid chain: NF-kappa-B inhibitor alpha (314 aa).

Residues 1-40 (MFQPAGHGQDWAMEGPRDGLKKERLVDDRHDSGLDSMKDE) form a disordered region. Residues 15-40 (GPRDGLKKERLVDDRHDSGLDSMKDE) are compositionally biased toward basic and acidic residues. Lys-21 participates in a covalent cross-link: Glycyl lysine isopeptide (Lys-Gly) (interchain with G-Cter in SUMO); alternate. Lys-21 is covalently cross-linked (Glycyl lysine isopeptide (Lys-Gly) (interchain with G-Cter in ubiquitin); alternate). A Glycyl lysine isopeptide (Lys-Gly) (interchain with G-Cter in ubiquitin) cross-link involves residue Lys-22. A Destruction motif motif is present at residues 30-36 (HDSGLDS). Ser-32 is subject to Phosphoserine; by IKKB. At Ser-36 the chain carries Phosphoserine; by IKKA, IKKB, IKKE and TBK1. Tyr-42 carries the phosphotyrosine modification. A Nuclear export signal motif is present at residues 45–54 (MVKELREIRL). 5 ANK repeats span residues 73 to 103 (DGDS…DLAF), 110 to 139 (LQQT…DPEL), 143 to 172 (RGNT…PQHL), 182 to 211 (NGHT…DVNA), and 216 to 245 (NGRT…DVNR). The Nuclear import signal signature appears at 110-120 (LQQTPLHLAVI). (3S)-3-hydroxyasparagine; by HIF1AN is present on residues Asn-210 and Asn-244. Residues Ser-283 and Ser-288 each carry the phosphoserine; by CK2 modification. Residue Thr-291 is modified to Phosphothreonine; by CK2. Position 293 is a phosphoserine; by CK2 (Ser-293). Thr-296 is subject to Phosphothreonine.

It belongs to the NF-kappa-B inhibitor family. In terms of assembly, interacts with RELA; the interaction requires the nuclear import signal. Part of a 70-90 kDa complex at least consisting of CHUK, IKBKB, NFKBIA, RELA, ELP1 and MAP3K14. Interacts with NKIRAS1 and NKIRAS2. Interacts with RWDD3; the interaction enhances sumoylation. Interacts with PRMT2. Interacts with PRKACA in platelets; this interaction is disrupted by thrombin and collagen. Interacts with MEFV. Interacts with DDRGK1; positively regulates NFKBIA phosphorylation and degradation. Interacts with HNRNPA2B1; the interaction may be mediated by the RRM2 domain of HNRNPA2B1, and HNRNPA2B1 may interact simultaneously with FAM76B and either NFKBIA or NFKBIE to form a complex. Post-translationally, phosphorylated at Ser-32 and Ser-36 by IKKA/CHUK and IKKB/IKBKB; disables inhibition of NF-kappa-B DNA-binding activity. Phosphorylation at positions 32 and 36 is prerequisite to recognition by the SCF(FBXW11) and SCF(BTRC) complexes, leading to polyubiquitination and subsequent degradation. In terms of processing, polyubiquitinated at Lys-21 and/or Lys-22 following phosphorylation at Ser-32 and Ser-36. Monoubiquitinated at Lys-21 and/or Lys-22 by UBE2D3. Ubiquitin chain elongation is then performed by CDC34 in cooperation with the SCF(FBXW11) E3 ligase complex, building ubiquitin chains from the UBE2D3-primed NFKBIA-linked ubiquitin. The resulting polyubiquitination leads to protein degradation. Also ubiquitinated by the SCF(BTRC) complex following stimulus-dependent phosphorylation at Ser-32 and Ser-36. Deubiquitinated by USP38, leading to NF-kappa-B inhibition. Sumoylated; sumoylation requires the presence of the nuclear import signal. Sumoylation blocks ubiquitination and proteasome-mediated degradation of the protein thereby increasing the protein stability. Post-translationally, hydroxylated by HIF1AN. Highly expressed in lymph node, thymus followed by liver, brain, muscle, kidney, gastrointestinal and reproductive tract.

It is found in the cytoplasm. Its subcellular location is the nucleus. Its function is as follows. Inhibits the activity of dimeric NF-kappa-B/REL complexes by trapping REL (RELA/p65 and NFKB1/p50) dimers in the cytoplasm by masking their nuclear localization signals. On cellular stimulation by immune and pro-inflammatory responses, becomes phosphorylated promoting ubiquitination and degradation, enabling the dimeric RELA to translocate to the nucleus and activate transcription. This chain is NF-kappa-B inhibitor alpha (Nfkbia), found in Mus musculus (Mouse).